The sequence spans 129 residues: Protein UL131A (129 aa).

The first 18 residues, 1-18, serve as a signal peptide directing secretion; it reads MRLCRVWLSVCLCAVVLG.

As to quaternary structure, forms the envelope pentamer complex (PC) composed of gH, gL, UL128, UL130, and UL131A. The pentamer interacts with host NRP2. The interaction with gH is important for the formation of UL128, UL130, gH-gL complex.

The protein resides in the virion membrane. Plays a role in viral entry into host cells. Forms a pentameric complex at the surface of the viral envelope together with gH, gL, UL130 and UL131. This complex is required for entry in epithelial, endothelial and myeloid host cells. Mechanistically, engages host receptor(s) including neurophilin 2/NRP2 to mediate infection. Contributes to the formation of the complex between UL128, UL130 and gH-gL. The chain is Protein UL131A (UL131A) from Human cytomegalovirus (strain Merlin) (HHV-5).